The chain runs to 353 residues: Holliday junction branch migration complex subunit RuvB (353 aa).

Positions 4–186 (ADRLIAATHS…FGIVQRLEFY (183 aa)) are large ATPase domain (RuvB-L). Residues Ile-25, Arg-26, Gly-67, Lys-70, Thr-71, Thr-72, 133–135 (EDF), Arg-176, Tyr-186, and Arg-223 contribute to the ATP site. Residue Thr-71 participates in Mg(2+) binding. Residues 187 to 257 (STADLATIVS…VADLALNLLD (71 aa)) are small ATPAse domain (RuvB-S). The head domain (RuvB-H) stretch occupies residues 260 to 353 (EHGFDHQDRR…VDEFLDAVDD (94 aa)). 3 residues coordinate DNA: Arg-296, Arg-315, and Arg-320.

Belongs to the RuvB family. In terms of assembly, homohexamer. Forms an RuvA(8)-RuvB(12)-Holliday junction (HJ) complex. HJ DNA is sandwiched between 2 RuvA tetramers; dsDNA enters through RuvA and exits via RuvB. An RuvB hexamer assembles on each DNA strand where it exits the tetramer. Each RuvB hexamer is contacted by two RuvA subunits (via domain III) on 2 adjacent RuvB subunits; this complex drives branch migration. In the full resolvosome a probable DNA-RuvA(4)-RuvB(12)-RuvC(2) complex forms which resolves the HJ.

It is found in the cytoplasm. The enzyme catalyses ATP + H2O = ADP + phosphate + H(+). Its function is as follows. The RuvA-RuvB-RuvC complex processes Holliday junction (HJ) DNA during genetic recombination and DNA repair, while the RuvA-RuvB complex plays an important role in the rescue of blocked DNA replication forks via replication fork reversal (RFR). RuvA specifically binds to HJ cruciform DNA, conferring on it an open structure. The RuvB hexamer acts as an ATP-dependent pump, pulling dsDNA into and through the RuvAB complex. RuvB forms 2 homohexamers on either side of HJ DNA bound by 1 or 2 RuvA tetramers; 4 subunits per hexamer contact DNA at a time. Coordinated motions by a converter formed by DNA-disengaged RuvB subunits stimulates ATP hydrolysis and nucleotide exchange. Immobilization of the converter enables RuvB to convert the ATP-contained energy into a lever motion, pulling 2 nucleotides of DNA out of the RuvA tetramer per ATP hydrolyzed, thus driving DNA branch migration. The RuvB motors rotate together with the DNA substrate, which together with the progressing nucleotide cycle form the mechanistic basis for DNA recombination by continuous HJ branch migration. Branch migration allows RuvC to scan DNA until it finds its consensus sequence, where it cleaves and resolves cruciform DNA. This Pseudomonas fluorescens (strain Pf0-1) protein is Holliday junction branch migration complex subunit RuvB.